A 146-amino-acid polypeptide reads, in one-letter code: MGTRSRRPQLLWLLLLCGTCARVCGCNETRMLERLPRCGKTFAERMREVAVWKWCDLSQFIVFYESFTNCTEEETVVVGCYWPNPLAQGFITGVHRQFFSNCTVDRTHWEDPPDEVLIPLIAVPILLTVAMTGLVVWRSKRTDQLP.

Positions methionine 1–alanine 21 are cleaved as a signal peptide. The Extracellular portion of the chain corresponds to arginine 22–valine 116. Asparagine 27, asparagine 69, and asparagine 101 each carry an N-linked (GlcNAc...) asparagine glycan. Cystine bridges form between cysteine 38/cysteine 70 and cysteine 55/cysteine 102. The chain crosses the membrane as a helical span at residues leucine 117–valine 136. Residues tryptophan 137–proline 146 lie on the Cytoplasmic side of the membrane.

It belongs to the RAMP family. As to quaternary structure, heterodimer of CALCRL and RAMP3. Interacts with GPER1.

The protein localises to the cell membrane. It localises to the membrane. Plays a role in cardioprotection by reducing cardiac hypertrophy and perivascular fibrosis in a GPER1-dependent manner. Transports the calcitonin gene-related peptide type 1 receptor (CALCRL) and GPER1 to the plasma membrane. Acts as a receptor for adrenomedullin (AM) together with CALCRL. The sequence is that of Receptor activity-modifying protein 3 (RAMP3) from Cavia porcellus (Guinea pig).